The chain runs to 577 residues: Zinc finger-containing ubiquitin peptidase 1 (577 aa).

The segment at 2 to 24 adopts a C2H2-type 1 zinc-finger fold; it reads LSCDICGETVTSEPDRKAHLIVH. The C2H2-type 2; atypical zinc finger occupies 29–52; it reads IICPFCKLSGINYNEMCFHIETAH. 2 C2H2-type zinc fingers span residues 153 to 176 and 192 to 214; these read PECP…KTKH and YDCP…VDLH. Residues 225 to 247 are MIU; it reads DRVQCSSDRELAHQLQQEEERKR. Residues 231 to 261 are compositionally biased toward basic and acidic residues; it reads SDRELAHQLQQEEERKRKSEESRQEREEFQK. The segment at 231-262 is disordered; that stretch reads SDRELAHQLQQEEERKRKSEESRQEREEFQKL. Residues 248–273 are zUBD/ZHA; sequence KSEESRQEREEFQKLQRQYGLDNSGG. Position 261 is an N6-acetyllysine (Lys-261). The active-site Nucleophile is Cys-359. His-490 serves as the catalytic Proton acceptor. Asp-511 is a catalytic residue.

Belongs to the peptidase C78 family. ZUFSP subfamily. As to quaternary structure, interacts with RPA1 and RPA2.

It localises to the cytoplasm. The protein localises to the nucleus. The catalysed reaction is Thiol-dependent hydrolysis of ester, thioester, amide, peptide and isopeptide bonds formed by the C-terminal Gly of ubiquitin (a 76-residue protein attached to proteins as an intracellular targeting signal).. Its function is as follows. Deubiquitinase with endodeubiquitinase activity that specifically interacts with and cleaves 'Lys-63'-linked long polyubiquitin chains. Shows only weak activity against 'Lys-11' and 'Lys-48'-linked chains. Plays an important role in genome stability pathways, functioning to prevent spontaneous DNA damage and also promote cellular survival in response to exogenous DNA damage. Modulates the ubiquitination status of replication protein A (RPA) complex proteins in response to replication stress. In Rattus norvegicus (Rat), this protein is Zinc finger-containing ubiquitin peptidase 1.